The sequence spans 195 residues: Dephospho-CoA kinase (195 aa).

Residues I3–N195 form the DPCK domain. An ATP-binding site is contributed by A11–T16.

It belongs to the CoaE family.

The protein localises to the cytoplasm. It carries out the reaction 3'-dephospho-CoA + ATP = ADP + CoA + H(+). Its pathway is cofactor biosynthesis; coenzyme A biosynthesis; CoA from (R)-pantothenate: step 5/5. Its function is as follows. Catalyzes the phosphorylation of the 3'-hydroxyl group of dephosphocoenzyme A to form coenzyme A. The polypeptide is Dephospho-CoA kinase (Bartonella quintana (strain Toulouse) (Rochalimaea quintana)).